The primary structure comprises 282 residues: HTH-type transcriptional activator RhaR (282 aa).

In terms of domain architecture, HTH araC/xylS-type spans 179–277 (DKLITALANS…GMTPSQWRHL (99 aa)). 2 DNA-binding regions (H-T-H motif) span residues 196 to 217 (DAFCQQEQCSERVLRQQFRAQT) and 244 to 267 (ISEISMQCGFEDSNYFSVVFTRET).

Binds DNA as a dimer.

Its subcellular location is the cytoplasm. Functionally, activates expression of the rhaSR operon in response to L-rhamnose. This is HTH-type transcriptional activator RhaR from Salmonella dublin (strain CT_02021853).